Consider the following 332-residue polypeptide: MRLAIDAMGGDHAPEEIIKGSLEALKHFQDIEIVLIGKEEVLRGLQRKEKRLKLVYASEVIENDEAPVTAVRKKKDSSMIVGLELLKKEEVDAFLSAGNTGALMAGALLTLGRIKGIDRPALAPILPTLNGATVLLDAGSNTNCDAQNLVQFAVMGHVYAQKMFEIERPRVGLFNIGAEEEKGNEVVKKAFEELKKSKLNFIGNVEGRDIPYGVCEVVVCDGFVGNAILKSMEGIASVISQLLKEELTRNIFTKLGALLIMGGLKRITKKMDYTEYGGAPLLGIKKPVIKAHGNSKAKAIFNAIKQAKNFVDNDVLNHIKEEIESMGDELSV.

This sequence belongs to the PlsX family. As to quaternary structure, homodimer. Probably interacts with PlsY.

The protein resides in the cytoplasm. The catalysed reaction is a fatty acyl-[ACP] + phosphate = an acyl phosphate + holo-[ACP]. It participates in lipid metabolism; phospholipid metabolism. Functionally, catalyzes the reversible formation of acyl-phosphate (acyl-PO(4)) from acyl-[acyl-carrier-protein] (acyl-ACP). This enzyme utilizes acyl-ACP as fatty acyl donor, but not acyl-CoA. This chain is Phosphate acyltransferase, found in Thermoanaerobacter pseudethanolicus (strain ATCC 33223 / 39E) (Clostridium thermohydrosulfuricum).